Here is a 325-residue protein sequence, read N- to C-terminus: Tetraacyldisaccharide 4'-kinase (325 aa).

53–60 (SVGGNGKT) contributes to the ATP binding site.

It belongs to the LpxK family.

It catalyses the reaction a lipid A disaccharide + ATP = a lipid IVA + ADP + H(+). Its pathway is glycolipid biosynthesis; lipid IV(A) biosynthesis; lipid IV(A) from (3R)-3-hydroxytetradecanoyl-[acyl-carrier-protein] and UDP-N-acetyl-alpha-D-glucosamine: step 6/6. Its function is as follows. Transfers the gamma-phosphate of ATP to the 4'-position of a tetraacyldisaccharide 1-phosphate intermediate (termed DS-1-P) to form tetraacyldisaccharide 1,4'-bis-phosphate (lipid IVA). The polypeptide is Tetraacyldisaccharide 4'-kinase (Actinobacillus succinogenes (strain ATCC 55618 / DSM 22257 / CCUG 43843 / 130Z)).